Reading from the N-terminus, the 79-residue chain is Conotoxin LiCr173 (79 aa).

The signal sequence occupies residues 1 to 20 (MSGLGTMVLTLLLLVFMVTS). The propeptide occupies 21-46 (HQDGGKKQATQRNAVNIRRRKSITQR). 3 cysteine pairs are disulfide-bonded: cysteine 52/cysteine 64, cysteine 56/cysteine 73, and cysteine 63/cysteine 77. At phenylalanine 78 the chain carries Phenylalanine amide.

It belongs to the conotoxin O3 superfamily. Expressed by the venom duct.

The protein resides in the secreted. This Conus lividus (Livid cone) protein is Conotoxin LiCr173.